The chain runs to 216 residues: Pyridoxine/pyridoxamine 5'-phosphate oxidase 1 (216 aa).

Substrate-binding positions include 10-13 (RREY) and K68. Residues 63–68 (RIVLLK), 78–79 (YT), K85, and Q107 contribute to the FMN site. Y125, R129, and S133 together coordinate substrate. FMN contacts are provided by residues 142–143 (QS) and W186. 192–194 (RLH) provides a ligand contact to substrate. R196 provides a ligand contact to FMN.

The protein belongs to the pyridoxamine 5'-phosphate oxidase family. As to quaternary structure, homodimer. FMN serves as cofactor.

It catalyses the reaction pyridoxamine 5'-phosphate + O2 + H2O = pyridoxal 5'-phosphate + H2O2 + NH4(+). It carries out the reaction pyridoxine 5'-phosphate + O2 = pyridoxal 5'-phosphate + H2O2. It functions in the pathway cofactor metabolism; pyridoxal 5'-phosphate salvage; pyridoxal 5'-phosphate from pyridoxamine 5'-phosphate: step 1/1. The protein operates within cofactor metabolism; pyridoxal 5'-phosphate salvage; pyridoxal 5'-phosphate from pyridoxine 5'-phosphate: step 1/1. Its function is as follows. Catalyzes the oxidation of either pyridoxine 5'-phosphate (PNP) or pyridoxamine 5'-phosphate (PMP) into pyridoxal 5'-phosphate (PLP). The protein is Pyridoxine/pyridoxamine 5'-phosphate oxidase 1 of Hydrogenovibrio crunogenus (strain DSM 25203 / XCL-2) (Thiomicrospira crunogena).